Here is a 945-residue protein sequence, read N- to C-terminus: Leucine--tRNA ligase (945 aa).

The 'HIGH' region motif lies at 66-77 (PYPSGTGLHVGH). A 'KMSKS' region motif is present at residues 716-720 (KMGKS). An ATP-binding site is contributed by lysine 719.

This sequence belongs to the class-I aminoacyl-tRNA synthetase family.

The protein localises to the cytoplasm. The enzyme catalyses tRNA(Leu) + L-leucine + ATP = L-leucyl-tRNA(Leu) + AMP + diphosphate. This is Leucine--tRNA ligase from Rhodococcus jostii (strain RHA1).